A 338-amino-acid chain; its full sequence is Aspartate-semialdehyde dehydrogenase (338 aa).

NADP(+) contacts are provided by residues 13–16 (SGAV) and 41–42 (RS). A phosphate-binding site is contributed by R101. C132 (acyl-thioester intermediate) is an active-site residue. Q159 lines the substrate pocket. 162-163 (SG) provides a ligand contact to NADP(+). Residue K216 participates in phosphate binding. R238 lines the substrate pocket. The active-site Proton acceptor is H245. N317 provides a ligand contact to NADP(+).

Belongs to the aspartate-semialdehyde dehydrogenase family. As to quaternary structure, homodimer.

It carries out the reaction L-aspartate 4-semialdehyde + phosphate + NADP(+) = 4-phospho-L-aspartate + NADPH + H(+). It functions in the pathway amino-acid biosynthesis; L-lysine biosynthesis via DAP pathway; (S)-tetrahydrodipicolinate from L-aspartate: step 2/4. The protein operates within amino-acid biosynthesis; L-methionine biosynthesis via de novo pathway; L-homoserine from L-aspartate: step 2/3. Its pathway is amino-acid biosynthesis; L-threonine biosynthesis; L-threonine from L-aspartate: step 2/5. In terms of biological role, catalyzes the NADPH-dependent formation of L-aspartate-semialdehyde (L-ASA) by the reductive dephosphorylation of L-aspartyl-4-phosphate. The chain is Aspartate-semialdehyde dehydrogenase from Shewanella violacea (strain JCM 10179 / CIP 106290 / LMG 19151 / DSS12).